The following is a 455-amino-acid chain: Transcription factor mokH (455 aa).

The interval Met-1 to Phe-22 is disordered. Residues Cys-26–Cys-58 constitute a DNA-binding region (zn(2)-C6 fungal-type). 2 disordered regions span residues Lys-68–Gly-113 and Leu-296–Val-317. Polar residues predominate over residues Ala-75–Thr-88. A compositionally biased stretch (low complexity) spans Ser-89 to Gly-113.

It is found in the nucleus. In terms of biological role, transcription factor that regulates the gene cluster that mediates the biosynthesis of monakolin K, also known as lovastatin, and which acts as a potent competitive inhibitor of HMG-CoA reductase. Monakolin K biosynthesis is performed in two stages. The first stage is catalyzed by the nonaketide synthase mokA, which belongs to type I polyketide synthases and catalyzes the iterative nine-step formation of the polyketide. This PKS stage is completed by the action of dehydrogenase mokE, which catalyzes the NADPH-dependent reduction of the unsaturated tetra-, penta- and heptaketide intermediates that arise during the mokA-mediated biosynthesis of the nonaketide chain and leads to dihydromonacolin L. Covalently bound dihydromonacolin L is released from mokA by the mokD esterase. Conversion of dihydromonacolin L into monacolin L and then monacolin J is subsequently performed with the participation of molecular oxygen and P450 monoogygenase mokC. Finally, mokF performs the conversion of monacoline J to monacoline K through the addition of the side-chain diketide moiety (2R)-2-methylbutanoate produced by the diketide synthase mokB. HMG-CoA reductase mokG may act as a down-regulator of monacolin K production. The protein is Transcription factor mokH of Monascus pilosus (Red mold).